We begin with the raw amino-acid sequence, 304 residues long: UTP--glucose-1-phosphate uridylyltransferase 1 (304 aa).

This sequence belongs to the UDPGP type 2 family.

It carries out the reaction alpha-D-glucose 1-phosphate + UTP + H(+) = UDP-alpha-D-glucose + diphosphate. It functions in the pathway carbohydrate metabolism; nucleotide-sugar metabolism. The protein is UTP--glucose-1-phosphate uridylyltransferase 1 (hasC1) of Streptococcus pyogenes serotype M18 (strain MGAS8232).